Here is an 83-residue protein sequence, read N- to C-terminus: Cytotoxin homolog 5 (83 aa).

A signal peptide spans 1–21; sequence MKTLLLTMVVVTIVCLDLGYT. Disulfide bonds link Cys24-Cys43, Cys36-Cys61, Cys65-Cys76, and Cys77-Cys82.

This sequence belongs to the three-finger toxin family. Short-chain subfamily. Orphan group XV sub-subfamily. In terms of tissue distribution, expressed by the venom gland.

It localises to the secreted. The protein localises to the target cell membrane. Its function is as follows. Has low cytotoxic activity. This chain is Cytotoxin homolog 5, found in Naja atra (Chinese cobra).